The primary structure comprises 235 residues: Secretory carrier-associated membrane protein 5A (235 aa).

Over 1–39 (MSDKPNNFPPLPRFIPLKPCFYQDFDTDIPDLHRTTAKR) the chain is Cytoplasmic. Residues 40–60 (LYYLWMLNSITLGVNLIGCLA) traverse the membrane as a helical segment. At 61-67 (WLIGGGS) the chain is on the extracellular side. The helical transmembrane segment at 68–88 (ATNFGLAFLWLILFTPCSYVC) threads the bilayer. Topologically, residues 89 to 102 (WFRPIYKAFKTDSS) are cytoplasmic. The helical transmembrane segment at 103–125 (FNFMAFFFTFTAQLVISIIQAVG) threads the bilayer. At 126-148 (IPGWGVCGWIASISFFGTNVGSA) the chain is on the extracellular side. Residues 149 to 169 (VVMLIPTIMFTAVAVLSFVAL) form a helical membrane-spanning segment. Residues 170 to 235 (TKVHRFYRGA…TPNYGYSNEM (66 aa)) lie on the Cytoplasmic side of the membrane.

It belongs to the SCAMP family. SCAMP5 subfamily.

The protein resides in the cell membrane. The protein localises to the golgi apparatus membrane. It is found in the golgi apparatus. It localises to the trans-Golgi network membrane. Its subcellular location is the recycling endosome membrane. The protein resides in the cytoplasmic vesicle. The protein localises to the secretory vesicle. It is found in the synaptic vesicle membrane. In terms of biological role, required for the calcium-dependent exocytosis of signal sequence-containing cytokines. Probably acts in cooperation with the SNARE machinery. This chain is Secretory carrier-associated membrane protein 5A (scamp5-a), found in Xenopus laevis (African clawed frog).